Reading from the N-terminus, the 908-residue chain is Zinc finger and BTB domain-containing protein 41 (908 aa).

Residues 38 to 59 (TQAPERPTPEAAQRCQELPPSP) form a disordered region. Positions 89–153 (CDLLIIVEGK…LYTSEFFVYK (65 aa)) constitute a BTB domain. The C2H2-type 1 zinc finger occupies 208-231 (HQCKFCSRHFCYKKSLENHLAKTH). Over residues 252-261 (RRSKRNRKCP) the composition is skewed to basic residues. Residues 252 to 344 (RRSKRNRKCP…EAGDSAGSIH (93 aa)) form a disordered region. The segment covering 267–276 (TSDDEQESGD) has biased composition (acidic residues). Over residues 279 to 296 (DNLHQESSEKERSDRNDS) the composition is skewed to basic and acidic residues. Over residues 297-336 (EDPGSEYNAEDEELEEEVSDEDSDTEQSDKDNDAEEEPEA) the composition is skewed to acidic residues. 13 consecutive C2H2-type zinc fingers follow at residues 360 to 382 (LQCP…TRVH), 388 to 410 (FECD…RKKH), 421 to 444 (HKCP…KRFH), 462 to 484 (WKCD…MILH), 490 to 513 (FKCT…EKFH), 517 to 540 (FPCD…ECTH), 546 to 568 (WTCF…LRIH), 574 to 596 (HLCS…LRVH), 602 to 624 (YECD…KKIH), 630 to 653 (HQCE…KSVH), 667 to 689 (HQCD…FRTH), 695 to 717 (YKCQ…LVIH), and 723 to 746 (FNCQ…DHVH).

The protein localises to the nucleus. In terms of biological role, may be involved in transcriptional regulation. The chain is Zinc finger and BTB domain-containing protein 41 (Zbtb41) from Mus musculus (Mouse).